Reading from the N-terminus, the 130-residue chain is Small ribosomal subunit protein uS9 (130 aa).

The protein belongs to the universal ribosomal protein uS9 family.

The sequence is that of Small ribosomal subunit protein uS9 from Buchnera aphidicola subsp. Acyrthosiphon pisum (strain 5A).